Reading from the N-terminus, the 517-residue chain is Nectin-1 (517 aa).

The signal sequence occupies residues 1 to 30 (MARMGLAGAAGRWWGLALGLTAFFLPGVHS). The region spanning 31-141 (QVVQVNDSMY…GNRESQLNLT (111 aa)) is the Ig-like V-type domain. Residues 31–355 (QVVQVNDSMY…GRRAGPVPTA (325 aa)) are Extracellular-facing. Residues Asn-36, Asn-72, and Asn-139 are each glycosylated (N-linked (GlcNAc...) asparagine). A disulfide bridge connects residues Cys-51 and Cys-124. Ig-like C2-type domains follow at residues 149–238 (WIEG…FKES) and 247–334 (PEVT…VNIT). 2 disulfides stabilise this stretch: Cys-172/Cys-226 and Cys-269/Cys-316. An N-linked (GlcNAc...) (complex) asparagine glycan is attached at Asn-202. The tract at residues 282-299 (WTTLNGSLPKGVEAQNRT) is interaction with FGFR. N-linked (GlcNAc...) asparagine glycans are attached at residues Asn-286, Asn-297, Asn-307, and Asn-332. The helical transmembrane segment at 356–376 (IIGGVAGSILLVLIVVGGIVV) threads the bilayer. The Cytoplasmic portion of the chain corresponds to 377-517 (ALRRRRHTFK…SFISKKEWYV (141 aa)). The tract at residues 399–488 (GYSKAGIPQH…DGYGDRTLGY (90 aa)) is disordered. Ser-422, Ser-434, and Ser-435 each carry phosphoserine. Residue Tyr-436 is modified to Phosphotyrosine. Over residues 436–445 (YEEEEEEEEG) the composition is skewed to acidic residues. Over residues 449 to 466 (GERKVGGPHPKYDEDAKR) the composition is skewed to basic and acidic residues. Ser-511 carries the post-translational modification Phosphoserine.

It belongs to the nectin family. Cis- and trans-homodimer. Can form trans-heterodimers with NECTIN3 and with NECTIN4. Interaction between NECTIN1 and NECTIN3 on the pre- and postsynaptic sites, respectively, initiates the formation of puncta adherentia junctions between axons and dendrites. Interacts (via cytoplasmic domain) with AFDN (via PDZ domain); this interaction recruits NECTIN1 to cadherin-based adherens junctions and provides a connection with the actin cytoskeleton. Interacts with integrin alphaV/beta3. Interacts (via Ig-like C2-type domain 2) with FGFR1, FGFR2 and FGFR3. In terms of assembly, (Microbial infection) Interacts with herpes simplex virus 1/HHV-1, herpes simplex virus 2/HHV-2, and pseudorabies virus/PRV envelope glycoprotein D. (Microbial infection) Ubiquitinated by CBL following infection by herpes simplex virus 1/HHV-1 and association with HHV-1 envelope glycoprotein D, leading to its removal from cell surface.

It is found in the cell membrane. It localises to the cell junction. The protein resides in the adherens junction. Its subcellular location is the presynaptic cell membrane. The protein localises to the secreted. Its function is as follows. Cell adhesion molecule that promotes cell-cell contacts and plays important roles in the development of the nervous system. Acts by forming homophilic or heterophilic trans-dimers. Heterophilic interactions have been detected between NECTIN1 and NECTIN3 and between NECTIN1 and NECTIN4. Involved in axon guidance by promoting contacts between the commissural axons and the floor plate cells. Involved in synaptogegesis. Has some neurite outgrowth-promoting activity. Promotes formation of checkerboard-like cellular pattern of hair cells and supporting cells in the auditory epithelium via heterophilic interaction with NECTIN3: NECTIN1 is present in the membrane of hair cells and associates with NECTIN3 on supporting cells, thereby mediating heterotypic adhesion between these two cell types. Required for enamel mineralization. In terms of biological role, (Microbial infection) Acts as a receptor for herpes simplex virus 1/HHV-1, herpes simplex virus 2/HHV-2, and pseudorabies virus/PRV. Constitutes the major receptor for herpes simplex virus 1/HHV-1 entry into host cells. The sequence is that of Nectin-1 from Homo sapiens (Human).